A 620-amino-acid polypeptide reads, in one-letter code: Chaperone protein HscA homolog (620 aa).

This sequence belongs to the heat shock protein 70 family.

In terms of biological role, chaperone involved in the maturation of iron-sulfur cluster-containing proteins. Has a low intrinsic ATPase activity which is markedly stimulated by HscB. This Shewanella baltica (strain OS155 / ATCC BAA-1091) protein is Chaperone protein HscA homolog.